Here is a 311-residue protein sequence, read N- to C-terminus: tRNA-cytidine(32) 2-sulfurtransferase (311 aa).

The short motif at 47–52 (SGGKDS) is the PP-loop motif element. [4Fe-4S] cluster is bound by residues cysteine 122, cysteine 125, and cysteine 213.

It belongs to the TtcA family. In terms of assembly, homodimer. Requires Mg(2+) as cofactor. [4Fe-4S] cluster is required as a cofactor.

Its subcellular location is the cytoplasm. It carries out the reaction cytidine(32) in tRNA + S-sulfanyl-L-cysteinyl-[cysteine desulfurase] + AH2 + ATP = 2-thiocytidine(32) in tRNA + L-cysteinyl-[cysteine desulfurase] + A + AMP + diphosphate + H(+). It participates in tRNA modification. Catalyzes the ATP-dependent 2-thiolation of cytidine in position 32 of tRNA, to form 2-thiocytidine (s(2)C32). The sulfur atoms are provided by the cysteine/cysteine desulfurase (IscS) system. The protein is tRNA-cytidine(32) 2-sulfurtransferase of Salmonella arizonae (strain ATCC BAA-731 / CDC346-86 / RSK2980).